Reading from the N-terminus, the 223-residue chain is Peptidyl-tRNA hydrolase (223 aa).

Tyrosine 16 contacts tRNA. Catalysis depends on histidine 21, which acts as the Proton acceptor. The tRNA site is built by phenylalanine 67, asparagine 69, and asparagine 113.

Belongs to the PTH family. As to quaternary structure, monomer.

The protein resides in the cytoplasm. The catalysed reaction is an N-acyl-L-alpha-aminoacyl-tRNA + H2O = an N-acyl-L-amino acid + a tRNA + H(+). Functionally, hydrolyzes ribosome-free peptidyl-tRNAs (with 1 or more amino acids incorporated), which drop off the ribosome during protein synthesis, or as a result of ribosome stalling. Catalyzes the release of premature peptidyl moieties from peptidyl-tRNA molecules trapped in stalled 50S ribosomal subunits, and thus maintains levels of free tRNAs and 50S ribosomes. The protein is Peptidyl-tRNA hydrolase of Helicobacter hepaticus (strain ATCC 51449 / 3B1).